Consider the following 810-residue polypeptide: Volume-regulated anion channel subunit LRRC8A (810 aa).

Position 1 is an N-acetylmethionine (Met-1). Over 1-22 (MIPVTELRYFADTQPAYRILKP) the chain is Cytoplasmic. A helical membrane pass occupies residues 23 to 47 (WWDVFTDYISIVMLMIAVFGGTLQV). At 48–123 (TQDKMICLPC…YENRLHWFAK (76 aa)) the chain is on the extracellular side. Intrachain disulfides connect Cys-54-Cys-310, Cys-57-Cys-65, and Cys-113-Cys-295. N-linked (GlcNAc...) asparagine glycosylation is found at Asn-66 and Asn-83. The chain crosses the membrane as a helical span at residues 124–142 (YFPYLVLLHTLIFLACSNF). Topologically, residues 143-264 (WFKFPRTSSK…EEGDIVYRLY (122 aa)) are cytoplasmic. Thr-200 is subject to Phosphothreonine. Ser-202 carries the phosphoserine modification. Thr-215 carries the phosphothreonine modification. The residue at position 217 (Ser-217) is a Phosphoserine. Residues 265–286 (MRQTIIKVIKFALIICYTVYYV) traverse the membrane as a helical segment. Residues 287-316 (HNIKFDVDCTVDIESLTGYRTYRCAHPLAT) are Extracellular-facing. A helical membrane pass occupies residues 317–341 (LFKILASFYISLVIFYGLICMYTLW). Over 342 to 810 (WMLRRSLKKY…RLWRADKEQA (469 aa)) the chain is Cytoplasmic. 17 LRR repeats span residues 411–422 (WTLDKLRQRLTK), 423–445 (NAQD…VFDL), 447–468 (ELEV…IAQL), 469–492 (TGLK…AFLR), 493–515 (ENLR…IYSL), 518–542 (LEEL…GLRE), 543–565 (LKRL…VTDV), 567–589 (VHLQ…SLKK), 590–613 (MVNL…IFSL), 614–637 (HNLQ…SFQH), 639–661 (HRLT…IGNL), 662–684 (TNLE…LFYC), 686–707 (KLRY…IGLL), 708–730 (QNLQ…LFQC), 732–753 (KLRA…VGEL), 754–776 (TNLT…LGEC), and 778–801 (LLKR…VKER). The Di-leucine motif signature appears at 706-707 (LL).

It belongs to the LRRC8 family. As to quaternary structure, heterohexamer; oligomerizes with other LRRC8 proteins (LRRC8B, LRRC8C, LRRC8D and/or LRRC8E) to form a heterohexamer. Can form homohexamers in vitro, but these have lower conductance than heterohexamers. In vivo, the subunit composition may depend primarily on expression levels, and heterooligomeric channels containing various proportions of the different LRRC8 proteins may coexist. Interact with GRB2. Interacts with NOX4; this interaction prevents the ubiquitin-mediated degradation of LRRC8A. N-glycosylated. In terms of tissue distribution, ubiquitously expressed. High levels detected in the bone marrow; lower levels found in peripheral blood cells. Highly expressed in pancreatic beta cells.

It is found in the cell membrane. The protein resides in the lysosome membrane. It carries out the reaction chloride(in) = chloride(out). It catalyses the reaction iodide(out) = iodide(in). The catalysed reaction is taurine(out) = taurine(in). The enzyme catalyses L-aspartate(out) = L-aspartate(in). It carries out the reaction L-glutamate(out) = L-glutamate(in). It catalyses the reaction myo-inositol(out) = myo-inositol(in). The catalysed reaction is 2',3'-cGAMP(out) = 2',3'-cGAMP(in). Inhibited by (4-[(2-butyl-6,7-dichloro-2-cyclopentyl-2,3-dihydro-1-oxo-1H-inden-5-yl)oxy]butanoic acid), which plugs the channel like a cork in a bottle by binding in the extracellular selectivity filter and sterically occluding ion conduction. Lipids may block conduction in closed heterohexameric channels. Its function is as follows. Essential component of the volume-regulated anion channel (VRAC, also named VSOAC channel), an anion channel required to maintain a constant cell volume in response to extracellular or intracellular osmotic changes. The VRAC channel conducts iodide better than chloride and can also conduct organic osmolytes like taurine. Mediates efflux of amino acids, such as aspartate and glutamate, in response to osmotic stress. In complex with LRRC8C or LRRC8E, acts as a transporter of immunoreactive cyclic dinucleotide GMP-AMP (2'-3'-cGAMP), an immune messenger produced in response to DNA virus in the cytosol: mediates both import and export of 2'-3'-cGAMP, thereby promoting transfer of 2'-3'-cGAMP to bystander cells. In contrast, complexes containing LRRC8D inhibit transport of 2'-3'-cGAMP. Required for in vivo channel activity, together with at least one other family member (LRRC8B, LRRC8C, LRRC8D or LRRC8E); channel characteristics depend on the precise subunit composition. Can form functional channels by itself (in vitro). Involved in B-cell development: required for the pro-B cell to pre-B cell transition. Also required for T-cell development. Required for myoblast differentiation: VRAC activity promotes membrane hyperpolarization and regulates insulin-stimulated glucose metabolism and oxygen consumption. Also acts as a regulator of glucose-sensing in pancreatic beta cells: VRAC currents, generated in response to hypotonicity- or glucose-induced beta cell swelling, depolarize cells, thereby causing electrical excitation, leading to increase glucose sensitivity and insulin secretion. Also plays a role in lysosome homeostasis by forming functional lysosomal VRAC channels in response to low cytoplasmic ionic strength condition: lysosomal VRAC channels are necessary for the formation of large lysosome-derived vacuoles, which store and then expel excess water to maintain cytosolic water homeostasis. Acts as a key factor in NLRP3 inflammasome activation by modulating itaconate efflux and mitochondria function. This chain is Volume-regulated anion channel subunit LRRC8A, found in Mus musculus (Mouse).